The following is a 465-amino-acid chain: GTPase Der (465 aa).

EngA-type G domains are found at residues 3 to 166 (FLVA…LNEY) and 184 to 358 (IHFS…ACAN). GTP contacts are provided by residues 9–16 (GRANVGKS), 56–60 (DTGGI), 118–121 (NKVD), 190–197 (GRPNVGKS), 237–241 (DTAGV), and 302–305 (NKWD). One can recognise a KH-like domain in the interval 359–443 (KKITTADATC…PIVFEFKQSE (85 aa)). A disordered region spans residues 446 to 465 (FADRKNKRSKDEGSKSKKVK).

It belongs to the TRAFAC class TrmE-Era-EngA-EngB-Septin-like GTPase superfamily. EngA (Der) GTPase family. As to quaternary structure, associates with the 50S ribosomal subunit.

GTPase that plays an essential role in the late steps of ribosome biogenesis. This Francisella tularensis subsp. mediasiatica (strain FSC147) protein is GTPase Der.